Reading from the N-terminus, the 350-residue chain is S-adenosylmethionine:tRNA ribosyltransferase-isomerase (350 aa).

The protein belongs to the QueA family. As to quaternary structure, monomer.

Its subcellular location is the cytoplasm. The enzyme catalyses 7-aminomethyl-7-carbaguanosine(34) in tRNA + S-adenosyl-L-methionine = epoxyqueuosine(34) in tRNA + adenine + L-methionine + 2 H(+). The protein operates within tRNA modification; tRNA-queuosine biosynthesis. Its function is as follows. Transfers and isomerizes the ribose moiety from AdoMet to the 7-aminomethyl group of 7-deazaguanine (preQ1-tRNA) to give epoxyqueuosine (oQ-tRNA). The chain is S-adenosylmethionine:tRNA ribosyltransferase-isomerase from Parvibaculum lavamentivorans (strain DS-1 / DSM 13023 / NCIMB 13966).